Consider the following 609-residue polypeptide: Rhotekin-2 (609 aa).

In terms of domain architecture, REM-1 spans 5–81 (SLRGPALRLA…LQKLEEQIAN (77 aa)). A coiled-coil region spans residues 56–91 (KNLMVCNARLMAYTSELQKLEEQIANQTGRCDVKFE). Positions 286–393 (EDAFAGFLNQ…WMEAFWQHFF (108 aa)) constitute a PH domain. 2 disordered regions span residues 495-520 (HDEK…KSQS) and 554-609 (KPMA…QAQV). The span at 569–582 (RLSDGEHTDTKTNF) shows a compositional bias: basic and acidic residues.

Expressed in lymphocytes, CD4 positive T-cells and bone marrow-derived cells. Also expressed in lung, colon, thymus and brain.

Its function is as follows. May play an important role in lymphopoiesis. In Homo sapiens (Human), this protein is Rhotekin-2 (RTKN2).